The primary structure comprises 328 residues: D-cysteine desulfhydrase (328 aa).

Lys-51 is subject to N6-(pyridoxal phosphate)lysine.

This sequence belongs to the ACC deaminase/D-cysteine desulfhydrase family. In terms of assembly, homodimer. Pyridoxal 5'-phosphate is required as a cofactor.

The enzyme catalyses D-cysteine + H2O = hydrogen sulfide + pyruvate + NH4(+) + H(+). Catalyzes the alpha,beta-elimination reaction of D-cysteine and of several D-cysteine derivatives. It could be a defense mechanism against D-cysteine. The protein is D-cysteine desulfhydrase of Salmonella agona (strain SL483).